The primary structure comprises 210 residues: Prolactin-2 (210 aa).

The signal sequence occupies residues 1–23; the sequence is MARRSQGTKLHLAVLCLVVSCHA. Disulfide bonds link cysteine 69–cysteine 183 and cysteine 200–cysteine 210.

Belongs to the somatotropin/prolactin family.

It is found in the secreted. This is Prolactin-2 (prl2) from Oncorhynchus keta (Chum salmon).